The sequence spans 329 residues: Quinone oxidoreductase (329 aa).

Alanine 2 bears the N-acetylalanine mark. At lysine 23 the chain carries N6-acetyllysine. Residues tyrosine 53, 158–161 (SGGV), glycine 181, histidine 200, asparagine 229, 246–249 (VGCR), and 269–271 (VSL) contribute to the NADP(+) site. N6-succinyllysine is present on lysine 296.

Belongs to the zinc-containing alcohol dehydrogenase family. Quinone oxidoreductase subfamily. Homotetramer.

The protein localises to the cytoplasm. It catalyses the reaction 2 a quinone + NADPH + H(+) = 2 a 1,4-benzosemiquinone + NADP(+). Its function is as follows. Does not have alcohol dehydrogenase activity. Binds NADP and acts through a one-electron transfer process. Orthoquinones, such as 1,2-naphthoquinone or 9,10-phenanthrenequinone, are the best substrates (in vitro). May act in the detoxification of xenobiotics. Interacts with (AU)-rich elements (ARE) in the 3'-UTR of target mRNA species and enhances their stability. NADPH binding interferes with mRNA binding. This Rattus norvegicus (Rat) protein is Quinone oxidoreductase (Cryz).